The primary structure comprises 390 residues: Probable purine permease 18 (390 aa).

Residues 1–14 (MEMTEASKQTTAEG) show a composition bias toward polar residues. Residues 1 to 23 (MEMTEASKQTTAEGSANPEPDQI) are disordered. Serine 25 is subject to Phosphoserine. 10 helical membrane passes run 39–59 (ISVSLCIFLVLLGDSLVMLLL), 81–101 (WLQALVQNAAFPLLIPLFFIF), 120–140 (LILLYISLGVLVAAHSKLFAL), 148–168 (GVFTLISATQLIFTAIFAAII), 176–196 (WIILSIIGSILIYVFGSPEFG), 211–231 (WLTFAASVAFALSLCLFQLCF), 250–270 (VIEMQICVSFVATVVCLVGLF), 297–317 (IGLALSWQVWAVGLMGLVLYV), 324–344 (VVHMCTSPLVALFVVLAFDFM), and 348–368 (FSWPRIGTLIATVVALGSYFY).

This sequence belongs to the purine permeases (TC 2.A.7.14) family.

It localises to the membrane. The chain is Probable purine permease 18 (PUP18) from Arabidopsis thaliana (Mouse-ear cress).